We begin with the raw amino-acid sequence, 300 residues long: E3 ubiquitin-protein ligase RNF212B (300 aa).

The segment at 6 to 40 (CNQCFRKDGAHFFVTSCGHIFCKKCVTLEKCAVCG) adopts an RING-type zinc-finger fold. The stretch at 88–124 (LIAFYKHRITKLETAMQETQQALVSQDKELSVLRKEN) forms a coiled coil. Disordered regions lie at residues 141–251 (YQGS…HTRV) and 280–300 (PYQQQRQMGLPSGREAWTTSR). Residues 155 to 169 (TSPSQSVTPRPSFQH) show a composition bias toward polar residues. The span at 170-183 (SSQVVSRSSSVESV) shows a compositional bias: low complexity. The segment covering 191–200 (GSLGQGGRGL) has biased composition (gly residues). Polar residues predominate over residues 211-234 (NETPSPASTHSLSYRPSSASSGQG).

As to quaternary structure, homodimer. Autoubiquitinated.

Its subcellular location is the chromosome. It catalyses the reaction S-ubiquitinyl-[E2 ubiquitin-conjugating enzyme]-L-cysteine + [acceptor protein]-L-lysine = [E2 ubiquitin-conjugating enzyme]-L-cysteine + N(6)-ubiquitinyl-[acceptor protein]-L-lysine.. Its pathway is protein modification; protein ubiquitination. Functionally, ubiquitin E3 ligase that acts as a crucial factor for crossing-over (CO) formation during meiosis. Essential for normal prophase I progression and for ensuring appropriate CO designation in meiosis. Recruits key components of the cross-over machinery either directly ou indirectly, leading to the activation of the MutL-gamma complex. The function of RNF212B in CO designation is dependent on its catalytic activity. The protein is E3 ubiquitin-protein ligase RNF212B (RNF212B) of Pongo abelii (Sumatran orangutan).